A 177-amino-acid polypeptide reads, in one-letter code: ATP synthase subunit b (177 aa).

The chain crosses the membrane as a helical span at residues 35 to 55 (FFVVLAIFLIVLAVIGTFVVP).

This sequence belongs to the ATPase B chain family. In terms of assembly, F-type ATPases have 2 components, F(1) - the catalytic core - and F(0) - the membrane proton channel. F(1) has five subunits: alpha(3), beta(3), gamma(1), delta(1), epsilon(1). F(0) has three main subunits: a(1), b(2) and c(10-14). The alpha and beta chains form an alternating ring which encloses part of the gamma chain. F(1) is attached to F(0) by a central stalk formed by the gamma and epsilon chains, while a peripheral stalk is formed by the delta and b chains.

It localises to the cell membrane. Its function is as follows. F(1)F(0) ATP synthase produces ATP from ADP in the presence of a proton or sodium gradient. F-type ATPases consist of two structural domains, F(1) containing the extramembraneous catalytic core and F(0) containing the membrane proton channel, linked together by a central stalk and a peripheral stalk. During catalysis, ATP synthesis in the catalytic domain of F(1) is coupled via a rotary mechanism of the central stalk subunits to proton translocation. Component of the F(0) channel, it forms part of the peripheral stalk, linking F(1) to F(0). This Mycobacteroides abscessus (strain ATCC 19977 / DSM 44196 / CCUG 20993 / CIP 104536 / JCM 13569 / NCTC 13031 / TMC 1543 / L948) (Mycobacterium abscessus) protein is ATP synthase subunit b.